A 493-amino-acid polypeptide reads, in one-letter code: Probable malate:quinone oxidoreductase (493 aa).

It belongs to the MQO family. It depends on FAD as a cofactor.

It catalyses the reaction (S)-malate + a quinone = a quinol + oxaloacetate. The protein operates within carbohydrate metabolism; tricarboxylic acid cycle; oxaloacetate from (S)-malate (quinone route): step 1/1. The polypeptide is Probable malate:quinone oxidoreductase (Mycobacterium tuberculosis (strain ATCC 25177 / H37Ra)).